A 618-amino-acid polypeptide reads, in one-letter code: 25S rRNA (cytosine(2870)-C(5))-methyltransferase (618 aa).

The tract at residues 1 to 132 is disordered; sequence MGSRRHKNKQ…NDAHPIFSDD (132 aa). Basic residues predominate over residues 48–59; sequence RKKKKSKPFKKS. The span at 64–79 shows a compositional bias: acidic residues; that stretch reads EEVVEEDKDLPEVDLE. The segment covering 80–89 has biased composition (basic and acidic residues); sequence ELSKARKSLF. The segment covering 90–123 has biased composition (acidic residues); sequence DDEEDDDEAGLVDEELKDEFDLEQEYDYDEDEDN. S-adenosyl-L-methionine-binding positions include 353–359, Asp377, Asp404, and Asp421; that span reads AAAPGGK. Residue Cys478 is the Nucleophile of the active site. Residue Ser580 is modified to Phosphoserine.

It belongs to the class I-like SAM-binding methyltransferase superfamily. RsmB/NOP family. Interacts with NOP53. Interacts with TRM112.

Its subcellular location is the nucleus. The protein resides in the nucleolus. It catalyses the reaction cytidine(2870) in 25S rRNA + S-adenosyl-L-methionine = 5-methylcytidine(2870) in 25S rRNA + S-adenosyl-L-homocysteine + H(+). Functionally, S-adenosyl-L-methionine-dependent methyltransferase that specifically methylates the C(5) position of cytosine 2870 (m5C2870) in 25S rRNA. Required for 60S ribosomal subunit synthesis and processing. In Saccharomyces cerevisiae (strain ATCC 204508 / S288c) (Baker's yeast), this protein is 25S rRNA (cytosine(2870)-C(5))-methyltransferase (NOP2).